A 96-amino-acid chain; its full sequence is Large ribosomal subunit protein bL27 (96 aa).

The interval 12–33 is disordered; it reads HKGGGSSANGRNSAGRRLGAKA. Low complexity predominate over residues 19–28; it reads ANGRNSAGRR.

It belongs to the bacterial ribosomal protein bL27 family.

The chain is Large ribosomal subunit protein bL27 from Lactobacillus helveticus (strain DPC 4571).